Consider the following 565-residue polypeptide: uncharacterized protein (565 aa).

The signal sequence occupies residues 1-21; that stretch reads MKIPSQQVLLALPLLASPAQS. N-linked (GlcNAc...) asparagine glycans are attached at residues asparagine 46 and asparagine 88. One can recognise an FAD-binding PCMH-type domain in the interval 118–302; sequence QGIVPYYSVS…TSVTYKTHPK (185 aa). Histidine 155 carries the post-translational modification Pros-8alpha-FAD histidine. 5 N-linked (GlcNAc...) asparagine glycosylation sites follow: asparagine 191, asparagine 314, asparagine 364, asparagine 371, and asparagine 484.

The protein belongs to the oxygen-dependent FAD-linked oxidoreductase family. Requires FAD as cofactor.

It localises to the secreted. This is an uncharacterized protein from Arthroderma benhamiae (strain ATCC MYA-4681 / CBS 112371) (Trichophyton mentagrophytes).